The following is a 469-amino-acid chain: UDP-N-acetylmuramoylalanine--D-glutamate ligase (469 aa).

121-127 provides a ligand contact to ATP; that stretch reads GTNGKST.

This sequence belongs to the MurCDEF family.

It is found in the cytoplasm. It carries out the reaction UDP-N-acetyl-alpha-D-muramoyl-L-alanine + D-glutamate + ATP = UDP-N-acetyl-alpha-D-muramoyl-L-alanyl-D-glutamate + ADP + phosphate + H(+). Its pathway is cell wall biogenesis; peptidoglycan biosynthesis. Functionally, cell wall formation. Catalyzes the addition of glutamate to the nucleotide precursor UDP-N-acetylmuramoyl-L-alanine (UMA). This Agrobacterium fabrum (strain C58 / ATCC 33970) (Agrobacterium tumefaciens (strain C58)) protein is UDP-N-acetylmuramoylalanine--D-glutamate ligase.